Consider the following 467-residue polypeptide: UDP-N-acetylmuramoylalanine--D-glutamate ligase (467 aa).

Residue 118–124 (GTNGKTT) participates in ATP binding.

Belongs to the MurCDEF family.

It is found in the cytoplasm. The enzyme catalyses UDP-N-acetyl-alpha-D-muramoyl-L-alanine + D-glutamate + ATP = UDP-N-acetyl-alpha-D-muramoyl-L-alanyl-D-glutamate + ADP + phosphate + H(+). Its pathway is cell wall biogenesis; peptidoglycan biosynthesis. In terms of biological role, cell wall formation. Catalyzes the addition of glutamate to the nucleotide precursor UDP-N-acetylmuramoyl-L-alanine (UMA). The chain is UDP-N-acetylmuramoylalanine--D-glutamate ligase from Streptomyces avermitilis (strain ATCC 31267 / DSM 46492 / JCM 5070 / NBRC 14893 / NCIMB 12804 / NRRL 8165 / MA-4680).